A 480-amino-acid polypeptide reads, in one-letter code: 11S globulin subunit beta (480 aa).

Positions 1–21 (MARSSLFTFLCLAVFINGCLS) are cleaved as a signal peptide. At Gln22 the chain carries Pyrrolidone carboxylic acid. Cystine bridges form between Cys48–Cys81 and Cys124–Cys303. Cupin type-1 domains lie at 51–251 (ENLR…GLVR) and 309–458 (QNIG…EEAQ). Residues Lys408 and Arg468 each contribute to the Mg(2+) site.

This sequence belongs to the 11S seed storage protein (globulins) family. As to quaternary structure, hexamer; each subunit is composed of an acidic and a basic chain derived from a single precursor and linked by a disulfide bond.

In terms of biological role, this is a seed storage protein. This Cucurbita maxima (Pumpkin) protein is 11S globulin subunit beta.